A 556-amino-acid polypeptide reads, in one-letter code: Interleukin-1 receptor-like 1 (556 aa).

The signal sequence occupies residues Met-1 to Ala-18. 2 consecutive Ig-like C2-type domains span residues Lys-19–Thr-103 and Pro-114–Thr-197. The Extracellular portion of the chain corresponds to Lys-19–Ser-328. Cys-36 and Cys-87 are disulfide-bonded. N-linked (GlcNAc...) asparagine glycosylation is found at Asn-54, Asn-95, Asn-101, Asn-140, and Asn-191. Disulfide bonds link Cys-111-Cys-151 and Cys-133-Cys-181. The flexible linker stretch occupies residues Arg-198–Phe-211. The Ig-like C2-type 3 domain occupies Pro-212–Ser-319. N-linked (GlcNAc...) asparagine glycans are attached at residues Asn-232, Asn-254, and Asn-273. Disulfide bonds link Cys-235–Cys-303 and Cys-238–Cys-282. Lys-321 participates in a covalent cross-link: Glycyl lysine isopeptide (Lys-Gly) (interchain with G-Cter in ubiquitin). A helical membrane pass occupies residues Ile-329–Ile-349. Over Leu-350 to Gln-556 the chain is Cytoplasmic. The 161-residue stretch at Lys-375–Met-535 folds into the TIR domain. Glu-461 is a catalytic residue.

Belongs to the interleukin-1 receptor family. In terms of assembly, interacts with MYD88, IRAK1, IRAK4, and TRAF6. Bound to its ligand IL-33, interacts with IL1RAP to form the minimal interleukin-33 signaling complex with a 1:1:1 stoichiometry. Interacts with KIT (bound to KITLG/SCF). A mast cell-specific KITLG/SCF-induced interleukin-33 signaling complex contains IL1RL1, IL1RAP, KIT and MYD88. Interacts with TMED1. Ubiquitinated at Lys-321 in a FBXL19-mediated manner; leading to proteasomal degradation. Ubiquitination by TRAF6 via 'Lys-27'-linked polyubiquitination and deubiquitination by USP38 serves as a critical regulatory mechanism for fine-tuning IL1RL1-mediated inflammatory response. Highly expressed in kidney, lung, placenta, stomach, skeletal muscle, colon and small intestine. Isoform A is prevalently expressed in the lung, testis, placenta, stomach and colon. Isoform B is more abundant in the brain, kidney and the liver. Isoform C is not detected in brain, heart, liver, kidney and skeletal muscle. Expressed on T-cells in fibrotic liver; at protein level. Overexpressed in fibrotic and cirrhotic liver.

It localises to the cell membrane. Its subcellular location is the secreted. It carries out the reaction NAD(+) + H2O = ADP-D-ribose + nicotinamide + H(+). Receptor for interleukin-33 (IL-33) which plays crucial roles in innate and adaptive immunity, contributing to tissue homeostasis and responses to environmental stresses together with coreceptor IL1RAP. Its stimulation recruits MYD88, IRAK1, IRAK4, and TRAF6, followed by phosphorylation of MAPK3/ERK1 and/or MAPK1/ERK2, MAPK14, and MAPK8. Possibly involved in helper T-cell function. Upon tissue injury, induces UCP2-dependent mitochondrial rewiring that attenuates the generation of reactive oxygen species and preserves the integrity of Krebs cycle required for persistent production of itaconate and subsequent GATA3-dependent differentiation of inflammation-resolving alternatively activated macrophages. Functionally, inhibits IL-33 signaling. In Homo sapiens (Human), this protein is Interleukin-1 receptor-like 1 (IL1RL1).